The following is a 159-amino-acid chain: SsrA-binding protein (159 aa).

It belongs to the SmpB family.

Its subcellular location is the cytoplasm. In terms of biological role, required for rescue of stalled ribosomes mediated by trans-translation. Binds to transfer-messenger RNA (tmRNA), required for stable association of tmRNA with ribosomes. tmRNA and SmpB together mimic tRNA shape, replacing the anticodon stem-loop with SmpB. tmRNA is encoded by the ssrA gene; the 2 termini fold to resemble tRNA(Ala) and it encodes a 'tag peptide', a short internal open reading frame. During trans-translation Ala-aminoacylated tmRNA acts like a tRNA, entering the A-site of stalled ribosomes, displacing the stalled mRNA. The ribosome then switches to translate the ORF on the tmRNA; the nascent peptide is terminated with the 'tag peptide' encoded by the tmRNA and targeted for degradation. The ribosome is freed to recommence translation, which seems to be the essential function of trans-translation. The chain is SsrA-binding protein from Actinobacillus pleuropneumoniae serotype 5b (strain L20).